Reading from the N-terminus, the 373-residue chain is Muscleblind-like protein 2 (373 aa).

4 C3H1-type zinc fingers span residues 13–41, 47–73, 176–204, and 212–238; these read WLTL…HPPK, NGRV…HPPT, TDKL…HPAD, and DNTV…HPPA.

The protein belongs to the muscleblind family. In terms of assembly, interacts with ITGA3. As to expression, expressed in heart, brain, placenta, lung, liver, skeletal muscle, kidney and pancreas.

It is found in the nucleus. It localises to the cytoplasm. Mediates pre-mRNA alternative splicing regulation. Acts either as activator or repressor of splicing on specific pre-mRNA targets. Inhibits cardiac troponin-T (TNNT2) pre-mRNA exon inclusion but induces insulin receptor (IR) pre-mRNA exon inclusion in muscle. Antagonizes the alternative splicing activity pattern of CELF proteins. RNA-binding protein that binds to 5'ACACCC-3' core sequence, termed zipcode, within the 3'UTR of ITGA3. Binds to CUG triplet repeat expansion in myotonic dystrophy muscle cells by sequestering the target RNAs. Together with RNA binding proteins RBPMS and RBFOX2, activates vascular smooth muscle cells alternative splicing events. Regulates NCOR2 alternative splicing. Seems to regulate expression and localization of ITGA3 by transporting it from the nucleus to cytoplasm at adhesion plaques. May play a role in myotonic dystrophy pathophysiology (DM). This Homo sapiens (Human) protein is Muscleblind-like protein 2 (MBNL2).